We begin with the raw amino-acid sequence, 308 residues long: MIITSERISLKHLLTAEALTDREVMGLIRRAGEFKQGAKWHPEERQYFATNLFFENSTRTHKSFEVAEKKLGLEVIEFEASRSSVQKGETLYDTVLTMSAIGVDVAVIRHGKENYYDELIQSKTIQCSIINGGDGSGQHPTQCLLDLMTIYEEFGGFEGLKVAIVGDITHSRVAKSNMQLLNRLGAEIYFSGPEEWYDHQFDVYGQYVPLDEIVEKVDVMMLLRVQHERHDGKESFSKEGYHLEYGLTNERATRLQKHAIIMHPAPVNRDVELADELVESLQSRIVAQMSNGVFMRMAILEAILHGKA.

Positions 59 and 60 each coordinate carbamoyl phosphate. Position 87 (Lys87) interacts with L-aspartate. Positions 109, 139, and 142 each coordinate carbamoyl phosphate. L-aspartate contacts are provided by Arg172 and Arg224. Carbamoyl phosphate-binding residues include Ala265 and Pro266.

This sequence belongs to the aspartate/ornithine carbamoyltransferase superfamily. ATCase family. In terms of assembly, heterododecamer (2C3:3R2) of six catalytic PyrB chains organized as two trimers (C3), and six regulatory PyrI chains organized as three dimers (R2).

The enzyme catalyses carbamoyl phosphate + L-aspartate = N-carbamoyl-L-aspartate + phosphate + H(+). Its pathway is pyrimidine metabolism; UMP biosynthesis via de novo pathway; (S)-dihydroorotate from bicarbonate: step 2/3. In terms of biological role, catalyzes the condensation of carbamoyl phosphate and aspartate to form carbamoyl aspartate and inorganic phosphate, the committed step in the de novo pyrimidine nucleotide biosynthesis pathway. This is Aspartate carbamoyltransferase catalytic subunit from Enterococcus faecalis (strain ATCC 700802 / V583).